We begin with the raw amino-acid sequence, 85 residues long: Large ribosomal subunit protein bL27 (85 aa).

The interval 1–23 (MAHKKGQGSTQNNRDSAGRRLGV) is disordered.

Belongs to the bacterial ribosomal protein bL27 family.

The sequence is that of Large ribosomal subunit protein bL27 from Helicobacter hepaticus (strain ATCC 51449 / 3B1).